The following is a 427-amino-acid chain: Trigger factor (427 aa).

The 86-residue stretch at G163–P248 folds into the PPIase FKBP-type domain.

It belongs to the FKBP-type PPIase family. Tig subfamily.

It is found in the cytoplasm. It catalyses the reaction [protein]-peptidylproline (omega=180) = [protein]-peptidylproline (omega=0). Involved in protein export. Acts as a chaperone by maintaining the newly synthesized protein in an open conformation. Functions as a peptidyl-prolyl cis-trans isomerase. The protein is Trigger factor of Streptococcus pneumoniae (strain CGSP14).